Here is a 158-residue protein sequence, read N- to C-terminus: MSRRRGKVEPRHIEGDPKYNDKVISKFINCLMVDGKKSVAEAVFYDALEVIAKKTGQDPYQVFQEALENAKPQVEVKSRRVGGVTLPQFQSKFVRERRLALGIRWLIRYSRDRNEKSMKNKLAAEFMEAQKGTGSAIKKKEDIRKMADANKAFSHYRW.

This sequence belongs to the universal ribosomal protein uS7 family. As to quaternary structure, part of the 30S ribosomal subunit. Contacts proteins S9 and S11.

Functionally, one of the primary rRNA binding proteins, it binds directly to 16S rRNA where it nucleates assembly of the head domain of the 30S subunit. Is located at the subunit interface close to the decoding center, probably blocks exit of the E-site tRNA. The sequence is that of Small ribosomal subunit protein uS7 from Leptospira biflexa.